We begin with the raw amino-acid sequence, 288 residues long: Diaminopimelate epimerase (288 aa).

Residues N14 and N67 each coordinate substrate. The active-site Proton donor is the C76. Substrate is bound by residues 77–78 (GN), N166, N199, and 217–218 (ER). The active-site Proton acceptor is C226. 227–228 (GT) serves as a coordination point for substrate.

It belongs to the diaminopimelate epimerase family. As to quaternary structure, homodimer.

It is found in the cytoplasm. It catalyses the reaction (2S,6S)-2,6-diaminopimelate = meso-2,6-diaminopimelate. It participates in amino-acid biosynthesis; L-lysine biosynthesis via DAP pathway; DL-2,6-diaminopimelate from LL-2,6-diaminopimelate: step 1/1. In terms of biological role, catalyzes the stereoinversion of LL-2,6-diaminopimelate (L,L-DAP) to meso-diaminopimelate (meso-DAP), a precursor of L-lysine and an essential component of the bacterial peptidoglycan. The protein is Diaminopimelate epimerase of Bacillus cereus (strain AH820).